The following is a 133-amino-acid chain: Large ribosomal subunit protein eL32z (133 aa).

Belongs to the eukaryotic ribosomal protein eL32 family.

This is Large ribosomal subunit protein eL32z (RPL32A) from Arabidopsis thaliana (Mouse-ear cress).